Reading from the N-terminus, the 364-residue chain is Chaperone protein DnaJ 1 (364 aa).

The region spanning 7 to 71 is the J domain; the sequence is DYYEILGVNR…ERRSEYDAIL (65 aa). A CR-type zinc finger spans residues 124–200; that stretch reads GCEKEIIYSR…CYGRGRVSAQ (77 aa). 8 residues coordinate Zn(2+): Cys137, Cys140, Cys154, Cys157, Cys174, Cys177, Cys188, and Cys191. 4 CXXCXGXG motif repeats span residues 137-144, 154-161, 174-181, and 188-195; these read CPVCEGMG, CHACNGEG, CSVCKGKG, and CPTCYGRG.

Belongs to the DnaJ family. As to quaternary structure, homodimer. Zn(2+) is required as a cofactor.

The protein localises to the cytoplasm. Functionally, participates actively in the response to hyperosmotic and heat shock by preventing the aggregation of stress-denatured proteins and by disaggregating proteins, also in an autonomous, DnaK-independent fashion. Unfolded proteins bind initially to DnaJ; upon interaction with the DnaJ-bound protein, DnaK hydrolyzes its bound ATP, resulting in the formation of a stable complex. GrpE releases ADP from DnaK; ATP binding to DnaK triggers the release of the substrate protein, thus completing the reaction cycle. Several rounds of ATP-dependent interactions between DnaJ, DnaK and GrpE are required for fully efficient folding. Also involved, together with DnaK and GrpE, in the DNA replication of plasmids through activation of initiation proteins. In Aquifex aeolicus (strain VF5), this protein is Chaperone protein DnaJ 1.